A 260-amino-acid chain; its full sequence is Pyridoxine 5'-phosphate synthase (260 aa).

Residue Asn15 coordinates 3-amino-2-oxopropyl phosphate. 17 to 18 (DH) contacts 1-deoxy-D-xylulose 5-phosphate. Arg26 serves as a coordination point for 3-amino-2-oxopropyl phosphate. The Proton acceptor role is filled by His51. 1-deoxy-D-xylulose 5-phosphate-binding residues include Arg53 and His58. The Proton acceptor role is filled by Glu78. Thr108 serves as a coordination point for 1-deoxy-D-xylulose 5-phosphate. The active-site Proton donor is the His199. Residues Gly200 and 221–222 (GH) contribute to the 3-amino-2-oxopropyl phosphate site.

This sequence belongs to the PNP synthase family. As to quaternary structure, homooctamer; tetramer of dimers.

The protein localises to the cytoplasm. The catalysed reaction is 3-amino-2-oxopropyl phosphate + 1-deoxy-D-xylulose 5-phosphate = pyridoxine 5'-phosphate + phosphate + 2 H2O + H(+). The protein operates within cofactor biosynthesis; pyridoxine 5'-phosphate biosynthesis; pyridoxine 5'-phosphate from D-erythrose 4-phosphate: step 5/5. Catalyzes the complicated ring closure reaction between the two acyclic compounds 1-deoxy-D-xylulose-5-phosphate (DXP) and 3-amino-2-oxopropyl phosphate (1-amino-acetone-3-phosphate or AAP) to form pyridoxine 5'-phosphate (PNP) and inorganic phosphate. The chain is Pyridoxine 5'-phosphate synthase from Cupriavidus pinatubonensis (strain JMP 134 / LMG 1197) (Cupriavidus necator (strain JMP 134)).